Reading from the N-terminus, the 265-residue chain is Urease accessory protein UreH (265 aa).

Belongs to the UreD family. As to quaternary structure, ureH, UreF and UreG form a complex that acts as a GTP-hydrolysis-dependent molecular chaperone, activating the urease apoprotein by helping to assemble the nickel containing metallocenter of UreC. The UreE protein probably delivers the nickel.

Its subcellular location is the cytoplasm. In terms of biological role, required for maturation of urease via the functional incorporation of the urease nickel metallocenter. This chain is Urease accessory protein UreH, found in Helicobacter pylori (strain HPAG1).